The following is a 208-amino-acid chain: N-(5'-phosphoribosyl)anthranilate isomerase (208 aa).

Belongs to the TrpF family.

It catalyses the reaction N-(5-phospho-beta-D-ribosyl)anthranilate = 1-(2-carboxyphenylamino)-1-deoxy-D-ribulose 5-phosphate. Its pathway is amino-acid biosynthesis; L-tryptophan biosynthesis; L-tryptophan from chorismate: step 3/5. The chain is N-(5'-phosphoribosyl)anthranilate isomerase from Methanococcus vannielii (strain ATCC 35089 / DSM 1224 / JCM 13029 / OCM 148 / SB).